The following is a 95-amino-acid chain: Aspartyl/glutamyl-tRNA(Asn/Gln) amidotransferase subunit C (95 aa).

The protein belongs to the GatC family. As to quaternary structure, heterotrimer of A, B and C subunits.

The catalysed reaction is L-glutamyl-tRNA(Gln) + L-glutamine + ATP + H2O = L-glutaminyl-tRNA(Gln) + L-glutamate + ADP + phosphate + H(+). It carries out the reaction L-aspartyl-tRNA(Asn) + L-glutamine + ATP + H2O = L-asparaginyl-tRNA(Asn) + L-glutamate + ADP + phosphate + 2 H(+). In terms of biological role, allows the formation of correctly charged Asn-tRNA(Asn) or Gln-tRNA(Gln) through the transamidation of misacylated Asp-tRNA(Asn) or Glu-tRNA(Gln) in organisms which lack either or both of asparaginyl-tRNA or glutaminyl-tRNA synthetases. The reaction takes place in the presence of glutamine and ATP through an activated phospho-Asp-tRNA(Asn) or phospho-Glu-tRNA(Gln). The chain is Aspartyl/glutamyl-tRNA(Asn/Gln) amidotransferase subunit C from Chromobacterium violaceum (strain ATCC 12472 / DSM 30191 / JCM 1249 / CCUG 213 / NBRC 12614 / NCIMB 9131 / NCTC 9757 / MK).